We begin with the raw amino-acid sequence, 413 residues long: Serine hydroxymethyltransferase (413 aa).

Residues leucine 119 and 123–125 (GHL) contribute to the (6S)-5,6,7,8-tetrahydrofolate site. Position 228 is an N6-(pyridoxal phosphate)lysine (lysine 228).

It belongs to the SHMT family. As to quaternary structure, homodimer. Pyridoxal 5'-phosphate serves as cofactor.

The protein localises to the cytoplasm. It carries out the reaction (6R)-5,10-methylene-5,6,7,8-tetrahydrofolate + glycine + H2O = (6S)-5,6,7,8-tetrahydrofolate + L-serine. The protein operates within one-carbon metabolism; tetrahydrofolate interconversion. It participates in amino-acid biosynthesis; glycine biosynthesis; glycine from L-serine: step 1/1. Functionally, catalyzes the reversible interconversion of serine and glycine with tetrahydrofolate (THF) serving as the one-carbon carrier. This reaction serves as the major source of one-carbon groups required for the biosynthesis of purines, thymidylate, methionine, and other important biomolecules. Also exhibits THF-independent aldolase activity toward beta-hydroxyamino acids, producing glycine and aldehydes, via a retro-aldol mechanism. The chain is Serine hydroxymethyltransferase from Caldanaerobacter subterraneus subsp. tengcongensis (strain DSM 15242 / JCM 11007 / NBRC 100824 / MB4) (Thermoanaerobacter tengcongensis).